The following is a 471-amino-acid chain: Probable pyruvate, phosphate dikinase regulatory protein, chloroplastic (471 aa).

A chloroplast-targeting transit peptide spans 1–49; that stretch reads MSSSSSTSPRFGSMISAKLASPPPSLLLPPSPRLQGRRLTPPSCTPGTP. Residues 1–133 are disordered; the sequence is MSSSSSTSPR…PHPSSDEAAS (133 aa). Positions 21–32 are enriched in pro residues; the sequence is SPPPSLLLPPSP. Residues 71–88 show a composition bias toward polar residues; that stretch reads GSATTPRSPAQLGSSQLH. Residues 89-99 are compositionally biased toward basic residues; the sequence is RWSRARAHRSG. A compositionally biased stretch (basic and acidic residues) spans 100-111; it reads RRLEWPTIRDRG. 171–178 serves as a coordination point for ADP; it reads HSVNAALG.

It belongs to the pyruvate, phosphate/water dikinase regulatory protein family. PDRP subfamily.

The protein resides in the plastid. Its subcellular location is the chloroplast. It catalyses the reaction N(tele)-phospho-L-histidyl/L-threonyl-[pyruvate, phosphate dikinase] + ADP = N(tele)-phospho-L-histidyl/O-phospho-L-threonyl-[pyruvate, phosphate dikinase] + AMP + H(+). The enzyme catalyses N(tele)-phospho-L-histidyl/O-phospho-L-threonyl-[pyruvate, phosphate dikinase] + phosphate + H(+) = N(tele)-phospho-L-histidyl/L-threonyl-[pyruvate, phosphate dikinase] + diphosphate. Regulated by light/dark exposure. In terms of biological role, bifunctional serine/threonine kinase and phosphorylase involved in the dark/light-mediated regulation of PPDK by catalyzing its phosphorylation/dephosphorylation. Dark/light-induced changes in stromal concentrations of the competing ADP and Pi substrates govern the direction of the reaction. In the dark, phosphorylates the catalytic intermediate of PPDK (PPDK-HisP), inactivating it. Light exposure induces the phosphorolysis reaction that reactivates PPDK. The polypeptide is Probable pyruvate, phosphate dikinase regulatory protein, chloroplastic (PDRP1) (Oryza sativa subsp. indica (Rice)).